A 358-amino-acid chain; its full sequence is Phospho-N-acetylmuramoyl-pentapeptide-transferase (358 aa).

Helical transmembrane passes span 24 to 44, 73 to 93, 95 to 115, 134 to 154, 169 to 189, 197 to 217, 233 to 253, 261 to 281, 286 to 306, and 335 to 355; these read FRSIYAMITALLLAFIVGPWV, TMGGVLILVCIVVPTLLWADL, NVFIWLTLLIIVGYGVLGFVD, MFWQVLLAAGVGIFLFYLPGF, ELGILFIPFVTLVIVGASNAV, GLAIGPVAINAGTYLLFCYIA, GAGELAVLCGAMVGAGLGFLW, VFMGDVGSLSLGGALGTLAVL, ILLVIVGGVFVVEALSVIFQV, and KIIVRFWIITIILALVAISTL.

This sequence belongs to the glycosyltransferase 4 family. MraY subfamily. The cofactor is Mg(2+).

The protein localises to the cell inner membrane. It carries out the reaction UDP-N-acetyl-alpha-D-muramoyl-L-alanyl-gamma-D-glutamyl-meso-2,6-diaminopimeloyl-D-alanyl-D-alanine + di-trans,octa-cis-undecaprenyl phosphate = di-trans,octa-cis-undecaprenyl diphospho-N-acetyl-alpha-D-muramoyl-L-alanyl-D-glutamyl-meso-2,6-diaminopimeloyl-D-alanyl-D-alanine + UMP. The protein operates within cell wall biogenesis; peptidoglycan biosynthesis. Functionally, catalyzes the initial step of the lipid cycle reactions in the biosynthesis of the cell wall peptidoglycan: transfers peptidoglycan precursor phospho-MurNAc-pentapeptide from UDP-MurNAc-pentapeptide onto the lipid carrier undecaprenyl phosphate, yielding undecaprenyl-pyrophosphoryl-MurNAc-pentapeptide, known as lipid I. The polypeptide is Phospho-N-acetylmuramoyl-pentapeptide-transferase (Geobacter sp. (strain M21)).